Here is a 401-residue protein sequence, read N- to C-terminus: Argininosuccinate synthase (401 aa).

Residue 9–17 coordinates ATP; it reads AYSGGLDTS. L-citrulline is bound at residue Tyr88. Gly118 serves as a coordination point for ATP. 3 residues coordinate L-aspartate: Thr120, Asn124, and Asp125. Asn124 serves as a coordination point for L-citrulline. L-citrulline contacts are provided by Arg128, Ser177, Ser186, Glu262, and Tyr274.

This sequence belongs to the argininosuccinate synthase family. Type 1 subfamily. As to quaternary structure, homotetramer.

It localises to the cytoplasm. It catalyses the reaction L-citrulline + L-aspartate + ATP = 2-(N(omega)-L-arginino)succinate + AMP + diphosphate + H(+). The protein operates within amino-acid biosynthesis; L-arginine biosynthesis; L-arginine from L-ornithine and carbamoyl phosphate: step 2/3. In Chlorobaculum parvum (strain DSM 263 / NCIMB 8327) (Chlorobium vibrioforme subsp. thiosulfatophilum), this protein is Argininosuccinate synthase.